A 190-amino-acid chain; its full sequence is Imidazoleglycerol-phosphate dehydratase (190 aa).

Belongs to the imidazoleglycerol-phosphate dehydratase family.

The protein resides in the cytoplasm. It carries out the reaction D-erythro-1-(imidazol-4-yl)glycerol 3-phosphate = 3-(imidazol-4-yl)-2-oxopropyl phosphate + H2O. It functions in the pathway amino-acid biosynthesis; L-histidine biosynthesis; L-histidine from 5-phospho-alpha-D-ribose 1-diphosphate: step 6/9. The protein is Imidazoleglycerol-phosphate dehydratase of Campylobacter fetus subsp. fetus (strain 82-40).